The sequence spans 113 residues: Venom protein 184 (113 aa).

The signal sequence occupies residues Met-1–Ser-21.

Contains 3 disulfide bonds. In terms of tissue distribution, expressed by the venom gland.

The protein localises to the secreted. The protein is Venom protein 184 of Lychas mucronatus (Chinese swimming scorpion).